The primary structure comprises 79 residues: uncharacterized protein (79 aa).

Positions 1–19 are cleaved as a signal peptide; the sequence is MKYVALAFVLSLVILQISA.

As to expression, nacreous layer of shell (at protein level). Expressed primarily in the mantle with highest level in the mantle pallium and lower level in the mantle edge.

Its subcellular location is the secreted. This is an uncharacterized protein from Pinctada maxima (Silver-lipped pearl oyster).